Reading from the N-terminus, the 113-residue chain is U11-theraphotoxin-Hhn1a (113 aa).

An N-terminal signal peptide occupies residues 1–21 (MNTVRVTFLLVFVLAVSLGQA). Positions 22–74 (DKDENRMEMQEKTEQGKSYLDFAENLLLQKLEELEAKLPEEDSEESRNSRQKR) are excised as a propeptide. Basic and acidic residues predominate over residues 58–69 (KLPEEDSEESRN). Positions 58-82 (KLPEEDSEESRNSRQKRCIGEGVPC) are disordered. Cystine bridges form between cysteine 75-cysteine 90, cysteine 82-cysteine 95, and cysteine 89-cysteine 110.

The protein belongs to the neurotoxin 14 (magi-1) family. 01 (HNTX-16) subfamily. As to expression, expressed by the venom gland.

It is found in the secreted. Probable ion channel inhibitor. In Cyriopagopus hainanus (Chinese bird spider), this protein is U11-theraphotoxin-Hhn1a.